The chain runs to 95 residues: Small ribosomal subunit protein bS18 (95 aa).

Belongs to the bacterial ribosomal protein bS18 family. Part of the 30S ribosomal subunit. Forms a tight heterodimer with protein bS6.

Its function is as follows. Binds as a heterodimer with protein bS6 to the central domain of the 16S rRNA, where it helps stabilize the platform of the 30S subunit. This chain is Small ribosomal subunit protein bS18, found in Rickettsia prowazekii (strain Madrid E).